Consider the following 246-residue polypeptide: DNA polymerase sliding clamp 3 (246 aa).

Belongs to the PCNA family. The subunits circularize to form a toroid; DNA passes through its center. Replication factor C (RFC) is required to load the toroid on the DNA. Forms dimeric complexes with PCNA1 and PCNA2, and trimeric complexes with PCNA123 and PCNA323; does not form homotrimers. Crystal structures show a heterotetramer of 2 PCNA2 and 2 PCNA3, which would be large enough to clamp a Holliday junction.

Functionally, sliding clamp subunit that acts as a moving platform for DNA processing. Responsible for tethering the catalytic subunit of DNA polymerase and other proteins to DNA during high-speed replication. Both trimeric complexes inhibit DNA ligase and both 3'-5' and 5'-3' activity of Hel308 (Hjm) helicase, but stimulate Hjc, the Holliday junction cleavage enzyme. In Sulfurisphaera tokodaii (strain DSM 16993 / JCM 10545 / NBRC 100140 / 7) (Sulfolobus tokodaii), this protein is DNA polymerase sliding clamp 3.